Here is a 231-residue protein sequence, read N- to C-terminus: MNKLTVRNFIVGLLIVFSLNSFSSPPSISNSSSNSIDENSPINTFKISPDNQTSKKSDLATEEPKGCKYWLSLFKPVCHRLHQVWTEGHTDLYLSGYAWHNRFTYSAERIREKKYNELAWGGGLGKGFFDEKGNWHGLYAFAFLDSHRNVEPTAGYAYLRVANITKEFKAGLGFSVLVTARPDIFHNIPFPGAVPWAGIFYKKLSVKAAYIPGSSTNGNVLYVVGTYSFDK.

An N-terminal signal peptide occupies residues 1–23 (MNKLTVRNFIVGLLIVFSLNSFS). Residues 24 to 43 (SPPSISNSSSNSIDENSPIN) show a composition bias toward low complexity. Residues 24–59 (SPPSISNSSSNSIDENSPINTFKISPDNQTSKKSDL) are disordered. Active-site residues include His100, Asp145, and Ser146.

The protein belongs to the lipid A palmitoyltransferase family. As to quaternary structure, homodimer.

The protein resides in the cell outer membrane. It carries out the reaction a lipid A + a 1,2-diacyl-sn-glycero-3-phosphocholine = a hepta-acyl lipid A + a 2-acyl-sn-glycero-3-phosphocholine. It catalyses the reaction a lipid IVA + a 1,2-diacyl-sn-glycero-3-phosphocholine = a lipid IVB + a 2-acyl-sn-glycero-3-phosphocholine. The catalysed reaction is a lipid IIA + a 1,2-diacyl-sn-glycero-3-phosphocholine = a lipid IIB + a 2-acyl-sn-glycero-3-phosphocholine. Transfers a fatty acid residue from the sn-1 position of a phospholipid to the N-linked hydroxyfatty acid chain on the proximal unit of lipid A or its precursors. The chain is Lipid A acyltransferase PagP from Legionella longbeachae serogroup 1 (strain NSW150).